A 188-amino-acid polypeptide reads, in one-letter code: MFLTVKLLLGRRCSLKVSGKESVATLKKLVSQHLQVPEEQQHLLFRGQLLADDKYLSDYSIGPNASINVIMRPPEDAALDKTHQTQPLWLQLGQVLDKHFGAKDAKTVLGFLRQEHEERLQRLSLEALEQLVGQLLAQQQLDELAEEKEAPAVASELEQNNGGGGGGGGTGGEGGGKKEEEEGEEADQ.

The Ubiquitin-like domain occupies 1 to 76 (MFLTVKLLLG…INVIMRPPED (76 aa)). A disordered region spans residues 146–188 (EEKEAPAVASELEQNNGGGGGGGGTGGEGGGKKEEEEGEEADQ). Residues 161–174 (NGGGGGGGGTGGEG) show a composition bias toward gly residues.

In terms of tissue distribution, expressed specifically in post-meiotic male germ cells of the testis. Abundantly expressed in stage 14-16 spermatids.

The protein localises to the cytoplasm. The chain is Ubiquitin-like protein 4B (Ubl4b) from Mus musculus (Mouse).